The primary structure comprises 525 residues: GMP synthase [glutamine-hydrolyzing] (525 aa).

A Glutamine amidotransferase type-1 domain is found at 8 to 206 (PLLILDFGSQ…VVDICKASTD (199 aa)). The active-site Nucleophile is cysteine 85. Residues histidine 180 and glutamate 182 contribute to the active site. Residues 207–400 (WTPEHIIDEA…LGLPHDMVYR (194 aa)) form the GMPS ATP-PPase domain. 234-240 (SGGVDSS) provides a ligand contact to ATP.

In terms of assembly, homodimer.

The enzyme catalyses XMP + L-glutamine + ATP + H2O = GMP + L-glutamate + AMP + diphosphate + 2 H(+). The protein operates within purine metabolism; GMP biosynthesis; GMP from XMP (L-Gln route): step 1/1. Its function is as follows. Catalyzes the synthesis of GMP from XMP. The polypeptide is GMP synthase [glutamine-hydrolyzing] (Legionella pneumophila (strain Paris)).